The primary structure comprises 910 residues: DNA mismatch repair protein MutS (910 aa).

A compositionally biased stretch (basic and acidic residues) spans 1–11 (MEAKVEEKEPE). The tract at residues 1-21 (MEAKVEEKEPEPVENAGPDAP) is disordered. Residue 658 to 665 (GPNMGGKS) participates in ATP binding.

The protein belongs to the DNA mismatch repair MutS family.

In terms of biological role, this protein is involved in the repair of mismatches in DNA. It is possible that it carries out the mismatch recognition step. This protein has a weak ATPase activity. This Brucella canis (strain ATCC 23365 / NCTC 10854 / RM-666) protein is DNA mismatch repair protein MutS.